Reading from the N-terminus, the 169-residue chain is Peptide methionine sulfoxide reductase MsrA (169 aa).

Cys-13 is an active-site residue.

Belongs to the MsrA Met sulfoxide reductase family.

It catalyses the reaction L-methionyl-[protein] + [thioredoxin]-disulfide + H2O = L-methionyl-(S)-S-oxide-[protein] + [thioredoxin]-dithiol. The enzyme catalyses [thioredoxin]-disulfide + L-methionine + H2O = L-methionine (S)-S-oxide + [thioredoxin]-dithiol. Its function is as follows. Has an important function as a repair enzyme for proteins that have been inactivated by oxidation. Catalyzes the reversible oxidation-reduction of methionine sulfoxide in proteins to methionine. The chain is Peptide methionine sulfoxide reductase MsrA from Mycolicibacterium gilvum (strain PYR-GCK) (Mycobacterium gilvum (strain PYR-GCK)).